A 198-amino-acid chain; its full sequence is Superoxide dismutase [Mn], mitochondrial (198 aa).

His26 provides a ligand contact to Mn(2+). Tyr34 carries the post-translational modification 3'-nitrotyrosine. Lys44 and Lys51 each carry N6-acetyllysine; alternate. Residues Lys44 and Lys51 each carry the N6-succinyllysine; alternate modification. His74 contacts Mn(2+). At Lys90 the chain carries N6-acetyllysine. N6-acetyllysine; alternate occurs at positions 98 and 106. 2 positions are modified to N6-succinyllysine; alternate: Lys98 and Lys106. Positions 159 and 163 each coordinate Mn(2+). Lys178 carries the post-translational modification N6-acetyllysine.

This sequence belongs to the iron/manganese superoxide dismutase family. Homotetramer. Mn(2+) serves as cofactor. Nitrated under oxidative stress. Nitration coupled with oxidation inhibits the catalytic activity. In terms of processing, acetylation at Lys-98 decreases enzymatic activity. Deacetylated by SIRT3 upon exposure to ionizing radiations or after long fasting. Post-translationally, polyubiquitinated; leading to proteasomal degradation. Deubiquitinated by USP36 which increases protein stability.

It is found in the mitochondrion matrix. It carries out the reaction 2 superoxide + 2 H(+) = H2O2 + O2. Functionally, destroys superoxide anion radicals which are normally produced within the cells and which are toxic to biological systems. The chain is Superoxide dismutase [Mn], mitochondrial (SOD2) from Macaca fuscata fuscata (Japanese macaque).